The sequence spans 482 residues: MLPVVALVGRPNVGKSTLFNRLTRTRDALVADFPGLTRDRKYGQANYEGLQFIVVDTGGISGDEQGIDMAMANQSLMAIDEADVVLFLVDARAGLTAADQGIAEHLRKQNKSVYVVANKVDGIDGDSESADFFALGLGDVNQIAAAHGRGVTQLLTHTLMPLSEQFPDMQVPEDEEADEEIDAEKQLEKLLASPIKLAIVGKPNVGKSTLTNRILGEERVVVYDQPGTTRDSIFIPMERDDREYVLIDTAGVRRRRSISEAVEKFSIVKTLQAIEEANVVLLVIDAQEGVTDQDLSLLGFVLNSGRSLVVAVNKWDGLAKDVKDEIKRELDRRLGFIDFARLHYISALHGTNVGHLFESVQEAYNSATKRINTSMLTRIMDMAQADHQPPVVRGRRVKMKYAHAGGYNPPIIVIHGNQVKDLPDSYKRYMMNYFRKSLKVMGTPIKVEFREGANPFESNTNTMTDSQRRKRKMLMRMHKNNK.

EngA-type G domains lie at 3-166 and 195-368; these read PVVA…SEQF and IKLA…NSAT. Residues 9–16, 56–60, 118–121, 201–208, 248–252, and 313–316 contribute to the GTP site; these read GRPNVGKS, DTGGI, NKVD, GKPNVGKS, DTAGV, and NKWD. The KH-like domain maps to 369–453; that stretch reads KRINTSMLTR…PIKVEFREGA (85 aa).

This sequence belongs to the TRAFAC class TrmE-Era-EngA-EngB-Septin-like GTPase superfamily. EngA (Der) GTPase family. Associates with the 50S ribosomal subunit.

In terms of biological role, GTPase that plays an essential role in the late steps of ribosome biogenesis. This is GTPase Der from Pseudoalteromonas atlantica (strain T6c / ATCC BAA-1087).